A 395-amino-acid chain; its full sequence is Univin (395 aa).

Positions 1–19 (MDVSKVLILTLIWLLTADS) are cleaved as a signal peptide. A propeptide spanning residues 20–272 (APPDYVTLTR…CSKRNRRNKR (253 aa)) is cleaved from the precursor. An N-linked (GlcNAc...) asparagine glycan is attached at asparagine 50. A disordered region spans residues 69 to 97 (EGAAASRGGETEIGKEEEEDGRPCSETKL). 2 N-linked (GlcNAc...) asparagine glycosylation sites follow: asparagine 116 and asparagine 336. Disulfide bonds link cysteine 294–cysteine 360, cysteine 323–cysteine 392, and cysteine 327–cysteine 394.

The protein belongs to the TGF-beta family. In terms of assembly, homodimer; disulfide-linked.

It localises to the secreted. Functionally, could have a critical role in early developmental decisions in the sea urchin embryo. In Strongylocentrotus purpuratus (Purple sea urchin), this protein is Univin.